The chain runs to 487 residues: Lysophospholipid acyltransferase 5 (487 aa).

Ala2 bears the N-acetylalanine mark. Transmembrane regions (helical) follow at residues 44-64 (LIIS…YLFY), 84-104 (FNFG…FLIL), 111-131 (ITAV…GYYY), 180-200 (GVPS…FLVG), 227-247 (IIPA…YTLL), and 285-305 (VTCW…FNGF). Catalysis depends on residues Asn338 and His374. Helical transmembrane passes span 364–384 (GLSL…LVCF), 422–442 (LVQQ…FCLF), and 453–473 (SIYF…PYIH). Positions 484–487 (KKME) match the Di-lysine motif motif.

This sequence belongs to the membrane-bound acyltransferase family. In terms of tissue distribution, highly expressed in liver, pancreas and adipose tissue. Very low expression in skeletal muscle and heart. Detected in neutrophils.

It localises to the endoplasmic reticulum membrane. The catalysed reaction is a 1-acyl-sn-glycero-3-phosphocholine + an acyl-CoA = a 1,2-diacyl-sn-glycero-3-phosphocholine + CoA. The enzyme catalyses a 1-acyl-sn-glycero-3-phosphoethanolamine + an acyl-CoA = a 1,2-diacyl-sn-glycero-3-phosphoethanolamine + CoA. It catalyses the reaction a 1-acyl-sn-glycero-3-phospho-L-serine + an acyl-CoA = a 1,2-diacyl-sn-glycero-3-phospho-L-serine + CoA. It carries out the reaction (9Z,12Z)-octadecadienoyl-CoA + a 1-acyl-sn-glycero-3-phosphocholine = 1-acyl-2-(9Z,12Z)-octadecadienoyl-sn-glycero-3-phosphocholine + CoA. The catalysed reaction is (5Z,8Z,11Z,14Z)-eicosatetraenoyl-CoA + a 1-acyl-sn-glycero-3-phosphocholine = 1-acyl-2-(5Z,8Z,11Z,14Z-eicosatetraenoyl)-sn-glycero-3-phosphocholine + CoA. The enzyme catalyses dodecanoyl-CoA + 1-hexadecanoyl-sn-glycero-3-phosphocholine = 1-hexadecanoyl-2-dodecanoyl-sn-glycero-3-phosphocholine + CoA. It catalyses the reaction octadecanoyl-CoA + 1-hexadecanoyl-sn-glycero-3-phosphocholine = 1-hexadecanoyl-2-octadecanoyl-sn-glycero-3-phosphocholine + CoA. It carries out the reaction 1-dodecanoyl-sn-glycero-3-phosphocholine + hexadecanoyl-CoA = 1-dodecanoyl-2-hexadecanoyl-sn-glycero-3-phosphocholine + CoA. The catalysed reaction is 1-tetradecanoyl-sn-glycero-3-phosphocholine + hexadecanoyl-CoA = 1-tetradecanoyl-2-hexadecanoyl-sn-glycero-3-phosphocholine + CoA. The enzyme catalyses 1-hexadecanoyl-sn-glycero-3-phosphocholine + hexadecanoyl-CoA = 1,2-dihexadecanoyl-sn-glycero-3-phosphocholine + CoA. It catalyses the reaction 1-octadecanoyl-sn-glycero-3-phosphocholine + hexadecanoyl-CoA = 1-octadecanoyl-2-hexadecanoyl-sn-glycero-3-phosphocholine + CoA. It carries out the reaction 1-(9Z-octadecenoyl)-sn-glycero-3-phosphocholine + hexadecanoyl-CoA = 1-(9Z-octadecenoyl)-2-hexadecanoyl-sn-glycero-3-phosphocholine + CoA. The catalysed reaction is (9Z)-hexadecenoyl-CoA + 1-hexadecanoyl-sn-glycero-3-phosphocholine = 1-hexadecanoyl-2-(9Z-hexadecenoyl)-sn-glycero-3-phosphocholine + CoA. The enzyme catalyses 1-hexadecanoyl-sn-glycero-3-phosphocholine + (9Z)-octadecenoyl-CoA = 1-hexadecanoyl-2-(9Z-octadecenoyl)-sn-glycero-3-phosphocholine + CoA. It catalyses the reaction (9Z,12Z)-octadecadienoyl-CoA + 1-hexadecanoyl-sn-glycero-3-phosphocholine = 1-hexadecanoyl-2-(9Z,12Z-octadecadienoyl)-sn-glycero-3-phosphocholine + CoA. It carries out the reaction 1-dodecanoyl-sn-glycero-3-phosphocholine + (5Z,8Z,11Z,14Z)-eicosatetraenoyl-CoA = 1-dodecanoyl-2-(5Z,8Z,11Z,14Z)-eicosatetraenoyl-sn-glycero-3-phosphocholine + CoA. The catalysed reaction is (5Z,8Z,11Z,14Z)-eicosatetraenoyl-CoA + 1-hexadecanoyl-sn-glycero-3-phosphocholine = 1-hexadecanoyl-2-(5Z,8Z,11Z,14Z-eicosatetraenoyl)-sn-glycero-3-phosphocholine + CoA. The enzyme catalyses 1-octadecanoyl-sn-glycero-3-phosphocholine + (5Z,8Z,11Z,14Z)-eicosatetraenoyl-CoA = 1-octadecanoyl-2-(5Z,8Z,11Z,14Z-eicosatetraenoyl)-sn-glycero-3-phosphocholine + CoA. It catalyses the reaction 1-eicosanoyl-sn-glycero-3-phosphocholine + (5Z,8Z,11Z,14Z)-eicosatetraenoyl-CoA = 1-eicosanoyl-2-(5Z,8Z,11Z,14Z)-eicosatetraenoyl-sn-glycero-3-phosphocholine + CoA. It carries out the reaction 1-(9Z-octadecenoyl)-sn-glycero-3-phosphocholine + (9Z)-octadecenoyl-CoA = 1,2-di-(9Z-octadecenoyl)-sn-glycero-3-phosphocholine + CoA. The catalysed reaction is 1-(9Z-octadecenoyl)-sn-glycero-3-phosphocholine + (9Z,12Z)-octadecadienoyl-CoA = 1-(9Z)-octadecenoyl-2-(9Z,12Z)-octadecadienoyl-sn-glycero-3-phosphocholine + CoA. The enzyme catalyses 1-(9Z-octadecenoyl)-sn-glycero-3-phosphocholine + (5Z,8Z,11Z,14Z)-eicosatetraenoyl-CoA = 1-(9Z)-octadecenoyl-2-(5Z,8Z,11Z,14Z)-icosatetraenoyl-sn-glycero-3-phosphocholine + CoA. It catalyses the reaction a 1-acyl-sn-glycero-3-phosphoethanolamine + (9Z,12Z)-octadecadienoyl-CoA = 1-acyl-2-(9Z,12Z)-octadecadienoyl-sn-glycero-3-phosphoethanolamine + CoA. It carries out the reaction 1-(9Z-octadecenoyl)-sn-glycero-3-phosphoethanolamine + (9Z,12Z)-octadecadienoyl-CoA = 1-(9Z)-octadecenoyl-2-(9Z,12Z)-octadecadienoyl-sn-glycero-3-phosphoethanolamine + CoA. The catalysed reaction is 1-(10Z-heptadecenoyl)-sn-glycero-3-phosphoethanolamine + (9Z,12Z)-octadecadienoyl-CoA = 1-(10Z-heptadecenoyl)-2-(9Z,12Z-octadecadienoyl)-sn-glycero-3-phosphoethanolamine + CoA. The enzyme catalyses a 1-acyl-sn-glycero-3-phosphoethanolamine + (5Z,8Z,11Z,14Z)-eicosatetraenoyl-CoA = 1-acyl-2-(5Z,8Z,11Z,14Z)-eicosatetraenoyl-sn-glycero-3-phosphoethanolamine + CoA. It catalyses the reaction 1-hexadecanoyl-sn-glycero-3-phosphoethanolamine + (5Z,8Z,11Z,14Z)-eicosatetraenoyl-CoA = 1-hexadecanoyl-2-(5Z,8Z,11Z,14Z-eicosatetraenoyl)-sn-glycero-3-phosphoethanolamine + CoA. It carries out the reaction 1-(9Z-octadecenoyl)-sn-glycero-3-phosphoethanolamine + (5Z,8Z,11Z,14Z)-eicosatetraenoyl-CoA = 1-(9Z)-octadecenoyl-2-(5Z,8Z,11Z,14Z)-eicosatetraenoyl-sn-glycero-3-phosphoethanolamine + CoA. The catalysed reaction is 1-(10Z-heptadecenoyl)-sn-glycero-3-phosphoethanolamine + (5Z,8Z,11Z,14Z)-eicosatetraenoyl-CoA = 1-(10Z-heptadecenoyl)-2-(5Z,8Z,11Z,14Z-eicosatetraenoyl)-sn-glycero-3-phosphoethanolamine + CoA. The enzyme catalyses a 1-O-(1Z-alkenyl)-sn-glycero-3-phosphoethanolamine + (5Z,8Z,11Z,14Z)-eicosatetraenoyl-CoA = 1-O-(1Z)-alkenyl-2-(5Z,8Z,11Z,14Z)-eicosatetraenoyl-sn-glycero-3-phosphoethanolamine + CoA. It catalyses the reaction a 1-acyl-sn-glycero-3-phospho-L-serine + (9Z,12Z)-octadecadienoyl-CoA = 1-acyl-2-(9Z,12Z-octadecadienoyl)-sn-glycero-3-phospho-L-serine + CoA. It carries out the reaction a 1-acyl-sn-glycero-3-phospho-L-serine + (5Z,8Z,11Z,14Z)-eicosatetraenoyl-CoA = 1-acyl-2-(5Z,8Z,11Z,14Z-eicosatetraenoyl)-sn-glycero-3-phospho-L-serine + CoA. The catalysed reaction is 1-hexadecanoyl-sn-glycero-3-phospho-L-serine + (9Z)-octadecenoyl-CoA = 1-hexadecanoyl-2-(9Z-octadecenoyl)-sn-glycero-3-phospho-L-serine + CoA. The enzyme catalyses 1-(9Z-octadecenoyl)-sn-glycero-3-phospho-L-serine + (9Z)-octadecenoyl-CoA = 1,2-di-(9Z)-octadecenoyl-sn-glycero-3-phospho-L-serine + CoA. It catalyses the reaction 1-hexadecanoyl-sn-glycero-3-phospho-L-serine + (9Z,12Z)-octadecadienoyl-CoA = 1-hexadecanoyl-2-(9Z,12Z-octadecadienoyl)-sn-glycero-3-phospho-L-serine + CoA. It carries out the reaction 1-(9Z-octadecenoyl)-sn-glycero-3-phospho-L-serine + (9Z,12Z)-octadecadienoyl-CoA = 1-(9Z-octadecenoyl)-2-(9Z,12Z-octadienoyl)-sn-glycero-3-phospho-L-serine + CoA. The catalysed reaction is 1-hexadecanoyl-sn-glycero-3-phospho-L-serine + (5Z,8Z,11Z,14Z)-eicosatetraenoyl-CoA = 1-hexadecanoyl-2-(5Z,8Z,11Z,14Z-eicosatetraenoyl)-sn-glycero-3-phospho-L-serine + CoA. The enzyme catalyses 1-(9Z-octadecenoyl)-sn-glycero-3-phospho-L-serine + (5Z,8Z,11Z,14Z)-eicosatetraenoyl-CoA = 1-(9Z-octadecenoyl)-2-(5Z,8Z,11Z,14Z-eicosatetraenoyl)-sn-glycero-3-phospho-L-serine + CoA. The protein operates within lipid metabolism; phospholipid metabolism. With respect to regulation, activity is inhibited by thimerosal. Its function is as follows. Lysophospholipid O-acyltransferase (LPLAT) that catalyzes the reacylation step of the phospholipid remodeling process also known as the Lands cycle. Catalyzes transfer of the fatty acyl chain from fatty acyl-CoA to 1-acyl lysophospholipid to form various classes of phospholipids. Converts 1-acyl lysophosphatidylcholine (LPC) into phosphatidylcholine (PC) (LPCAT activity), 1-acyl lysophosphatidylserine (LPS) into phosphatidylserine (PS) (LPSAT activity) and 1-acyl lysophosphatidylethanolamine (LPE) into phosphatidylethanolamine (PE) (LPEAT activity). Favors polyunsaturated fatty acyl-CoAs as acyl donors compared to saturated fatty acyl-CoAs. Has higher activity for LPC acyl acceptors compared to LPEs and LPSs. Can also transfer the fatty acyl chain from fatty acyl-CoA to 1-O-alkyl lysophospholipid or 1-O-alkenyl lysophospholipid with lower efficiency. Acts as a major LPC O-acyltransferase in liver and intestine. As a component of the liver X receptor/NR1H3 or NR1H2 signaling pathway, mainly catalyzes the incorporation of arachidonate into PCs of endoplasmic reticulum (ER) membranes, increasing membrane dynamics and enabling triacylglycerols transfer to nascent very low-density lipoprotein (VLDL) particles. Promotes processing of sterol regulatory protein SREBF1 in hepatocytes, likely by facilitating the translocation of SREBF1-SCAP complex from ER to the Golgi apparatus. Participates in mechanisms by which the liver X receptor/NR1H3 or NR1H2 signaling pathway counteracts lipid-induced ER stress response and inflammation. Down-regulates hepatic inflammation by limiting arachidonic acid availability for synthesis of inflammatory eicosanoids, such as prostaglandins. In enterocytes, acts as a component of a gut-brain feedback loop that coordinates dietary lipid absorption and food intake. Regulates the abundance of PCs containing linoleate and arachidonate in enterocyte membranes, enabling passive diffusion of fatty acids and cholesterol across the membrane for efficient chylomicron assembly. In the intestinal crypt, acts as a component of dietary-responsive phospholipid-cholesterol axis, regulating the biosynthesis of cholesterol and its mitogenic effects on intestinal stem cells. This Homo sapiens (Human) protein is Lysophospholipid acyltransferase 5 (LPCAT3).